We begin with the raw amino-acid sequence, 89 residues long: Small ribosomal subunit protein uS17 (89 aa).

It belongs to the universal ribosomal protein uS17 family. As to quaternary structure, part of the 30S ribosomal subunit.

One of the primary rRNA binding proteins, it binds specifically to the 5'-end of 16S ribosomal RNA. This Xylella fastidiosa (strain 9a5c) protein is Small ribosomal subunit protein uS17.